Reading from the N-terminus, the 415-residue chain is Phakinin (415 aa).

Residues 1-26 (MSTRRVVVDAPAGASSSMPLQRHKAS) are disordered. An N-acetylserine modification is found at Ser2. The tract at residues 2 to 114 (STRRVVVDAP…LGAVEDLGGC (113 aa)) is head. Phosphoserine occurs at positions 26, 32, and 35. A Phosphothreonine modification is found at Thr53. Phosphoserine is present on residues Ser90 and Ser100. Residues 104 to 415 (DLGAVEDLGG…HALLDREESS (312 aa)) enclose the IF rod domain. 3 coiled-coil regions span residues 115 to 144 (LVEY…ESKA), 199 to 248 (RKAA…VKML), and 295 to 395 (QAKQ…LSHK). The tail stretch occupies residues 396–415 (CQLQRDVASYHALLDREESS).

It belongs to the intermediate filament family. In terms of assembly, part of a complex required for lens intermediate filament formation composed of BFSP1, BFSP2 and CRYAA. Found in a complex composed of PPL (via C-terminal linker domain), BFSP1 and BFSP2 in the retinal lens. Within the complex interacts with PPL (via C-terminal linker domain) and with BFSP1. Identified in a complex that contains VIM, EZR, AHNAK, BFSP1, BFSP2, ANK2, PLEC, PRX and spectrin. Interacts with LGSN. Interacts with VIM. In terms of tissue distribution, abundantly expressed in both the inner and outer cortex of the retina, expressed at a lower level in the nucleus of the retina (at protein level). Detected in eye lens fiber cells (at protein level).

Its subcellular location is the cell membrane. It is found in the cytoplasm. The protein resides in the cytoskeleton. It localises to the cell cortex. Its function is as follows. Required for the correct formation of lens intermediate filaments as part of a complex composed of BFSP1, BFSP2 and CRYAA. Plays a role in maintenance of retinal lens optical clarity. The polypeptide is Phakinin (BFSP2) (Bos taurus (Bovine)).